A 179-amino-acid chain; its full sequence is Oryzines biosynthesis cluster protein J (179 aa).

In terms of domain architecture, Cupin type-2 spans 88 to 148; sequence YVDYHPGCEP…NHCWRNPSKT (61 aa).

Belongs to the oryJ family.

It participates in secondary metabolite biosynthesis. Functionally, part of the gene cluster that mediates the biosynthesis of oryzines, natural products with an unusual maleidride backbone. The two subunits of the fungal fatty acid synthase oryfasA and oryfasB probably form octenoic acid. This fatty acid is most likely activated by the acyl-CoA ligase oryP to give octenyl-CoA before the citrate synthase-like protein oryE catalyzes condensation with oxaloacetate to form tricarboxylic acid. The next steps of the pathways are conjectural, but a favorite possible route has been proposed, beginning with decarboxylation and concomitant dehydration by the decarboxylase oryM, followed by tautomerization, which may lead to the production of a diene intermediate. Reduction of this diene intermediate could give the known metabolite piliformic acid. On the pathway to oryzine B and oryzine A, however, hydroxylation of the diene by the alpha-ketoglutarate-dependent dioxygenase oryG and lactonisation by the lactonohydrolases oryH or oryL could give oryzine B directly. Finally, enoyl reduction by the dehydrogenase oryD would then convert oryzine B into oryzine A. This Aspergillus oryzae (strain ATCC 42149 / RIB 40) (Yellow koji mold) protein is Oryzines biosynthesis cluster protein J.